The primary structure comprises 287 residues: Protease HtpX homolog (287 aa).

The next 2 membrane-spanning stretches (helical) occupy residues 4 to 24 (VGLF…VMSL) and 35 to 53 (LLLM…SLAL). Histidine 139 is a binding site for Zn(2+). Glutamate 140 is a catalytic residue. Histidine 143 provides a ligand contact to Zn(2+). The next 2 helical transmembrane spans lie at 147–167 (GDMV…IFLS) and 194–214 (AVSM…VMWF). Glutamate 219 serves as a coordination point for Zn(2+).

Belongs to the peptidase M48B family. Requires Zn(2+) as cofactor.

The protein resides in the cell inner membrane. This is Protease HtpX homolog from Desulfotalea psychrophila (strain LSv54 / DSM 12343).